Reading from the N-terminus, the 260-residue chain is Small ribosomal subunit protein uS2 (260 aa).

It belongs to the universal ribosomal protein uS2 family.

This Streptococcus sanguinis (strain SK36) protein is Small ribosomal subunit protein uS2.